Here is a 161-residue protein sequence, read N- to C-terminus: uncharacterized protein (161 aa).

The protein to R.leguminosarum PsiB.

This is an uncharacterized protein from Sinorhizobium fredii (strain NBRC 101917 / NGR234).